Here is a 460-residue protein sequence, read N- to C-terminus: Benzyl alcohol O-benzoyltransferase (460 aa).

Active-site proton acceptor residues include His167 and Asp382.

It belongs to the plant acyltransferase family. In terms of tissue distribution, specifically expressed in flowers, mainly in the limb of flowers corollas, and, at low levels, in roots, stems, sepals and leaves.

The catalysed reaction is benzyl alcohol + benzoyl-CoA = benzyl benzoate + CoA. It carries out the reaction benzyl alcohol + acetyl-CoA = benzyl acetate + CoA. It catalyses the reaction 3-hydroxybenzyl alcohol + acetyl-CoA = 3-hydroxy-benzyl acetate + CoA. The enzyme catalyses 3-hydroxybenzyl alcohol + benzoyl-CoA = 3-hydroxy-benzyl benzoate + CoA. The catalysed reaction is 2-phenylethanol + benzoyl-CoA = phenethyl benzoate + CoA. It carries out the reaction (3Z)-hex-3-en-1-ol + benzoyl-CoA = (3Z)-hex-3-en-1-yl benzoate + CoA. It catalyses the reaction (2E)-geraniol + acetyl-CoA = (2E)-geranyl acetate + CoA. The enzyme catalyses butan-1-ol + benzoyl-CoA = butyl benzoate + CoA. The catalysed reaction is (2E)-geraniol + benzoyl-CoA = (2E)-geranyl benzoate + CoA. It carries out the reaction octan-1-ol + benzoyl-CoA = octyl benzoate + CoA. The protein operates within aromatic compound metabolism; benzoyl-CoA degradation. In terms of biological role, involved in the production of volatile organic compounds (VOCs), including floral volatile benzenoids and phenylpropanoids (FVBP), in flowers of fragrant cultivars (e.g. cv. Mitchell and cv. V26), scent attracting pollinators (e.g. the night-active hawkmoth pollinator Manduca sexta). Acyltransferase that catalyzes the transfer of benzoyl and acetyl moieties to a large variety of potential substrate alcohols, and involved in the formation of volatile esters benzyl benzoate and phenylethyl benzoate from benzoyl-CoA. With acetyl-CoA, mainly active on benzyl alcohol, and, to a lower extent, on 3-hydroxybenzyl alcohol, geraniol, and 2-phenylethanol, but barely active on butanol, 1-octanol, 4-hydroxy-benzyl alcohol, 2-hexanol, cis-3-hexen-1-ol and linalool. With benzoyl-CoA, mainly active on benzyl alcohol, but also efficient on several substrates, including 3-hydroxybenzyl alcohol, 2-phenylethanol, geraniol, butanol, cis-3-hexen-1-ol and 1-octanol. This chain is Benzyl alcohol O-benzoyltransferase, found in Petunia hybrida (Petunia).